The sequence spans 139 residues: ATP synthase epsilon chain (139 aa).

The protein belongs to the ATPase epsilon chain family. F-type ATPases have 2 components, CF(1) - the catalytic core - and CF(0) - the membrane proton channel. CF(1) has five subunits: alpha(3), beta(3), gamma(1), delta(1), epsilon(1). CF(0) has three main subunits: a, b and c.

The protein resides in the cell inner membrane. Produces ATP from ADP in the presence of a proton gradient across the membrane. In Alcanivorax borkumensis (strain ATCC 700651 / DSM 11573 / NCIMB 13689 / SK2), this protein is ATP synthase epsilon chain.